The primary structure comprises 303 residues: 2-dehydropantoate 2-reductase (303 aa).

NADP(+) contacts are provided by residues 7–12, asparagine 98, and alanine 122; that span reads GCGALG. Residue asparagine 98 coordinates substrate. The active-site Proton donor is the lysine 176. Positions 180, 184, 194, and 244 each coordinate substrate. An NADP(+)-binding site is contributed by glutamate 256.

Belongs to the ketopantoate reductase family. As to quaternary structure, monomer.

The protein localises to the cytoplasm. The catalysed reaction is (R)-pantoate + NADP(+) = 2-dehydropantoate + NADPH + H(+). Its pathway is cofactor biosynthesis; (R)-pantothenate biosynthesis; (R)-pantoate from 3-methyl-2-oxobutanoate: step 2/2. Catalyzes the NADPH-dependent reduction of ketopantoate into pantoic acid. The chain is 2-dehydropantoate 2-reductase (panE) from Salmonella typhi.